The primary structure comprises 242 residues: N-alpha-acetyltransferase 60 (242 aa).

Residues Met1 to Asp192 lie on the Cytoplasmic side of the membrane. In terms of domain architecture, N-acetyltransferase spans Thr13–Asn182. Residue Tyr38 coordinates substrate. Tyr97 is a catalytic residue. Leu99 provides a ligand contact to substrate. Acetyl-CoA is bound by residues Leu101 to Val103 and Lys109 to Ser114. His138 is an active-site residue. Acetyl-CoA contacts are provided by residues Asn143 and Tyr150–Arg153. Residues Pro162–Asp173 are required for homodimerization. Tyr165 serves as a coordination point for substrate. An intramembrane region (helical) is located at residues Tyr193–Ile236. Residues Glu237–Met242 lie on the Cytoplasmic side of the membrane.

The protein belongs to the acetyltransferase family. NAA60 subfamily. Monomer and homodimer; monomer in presence of substrate and homodimer in its absence.

The protein localises to the golgi apparatus membrane. It catalyses the reaction N-terminal L-methionyl-[transmembrane protein] + acetyl-CoA = N-terminal N(alpha)-acetyl-L-methionyl-[transmembrane protein] + CoA + H(+). The enzyme catalyses L-lysyl-[protein] + acetyl-CoA = N(6)-acetyl-L-lysyl-[protein] + CoA + H(+). Its function is as follows. N-alpha-acetyltransferase that specifically mediates the acetylation of N-terminal residues of the transmembrane proteins, with a strong preference for N-termini facing the cytosol. Displays N-terminal acetyltransferase activity towards a range of N-terminal sequences including those starting with Met-Lys, Met-Val, Met-Ala and Met-Met. Required for normal chromosomal segregation during anaphase. May also show histone acetyltransferase activity; such results are however unclear in vivo and would require additional experimental evidences. The polypeptide is N-alpha-acetyltransferase 60 (naa60) (Xenopus tropicalis (Western clawed frog)).